We begin with the raw amino-acid sequence, 92 residues long: Small ribosomal subunit protein uS19c (92 aa).

This sequence belongs to the universal ribosomal protein uS19 family.

It localises to the plastid. Its subcellular location is the chloroplast. Its function is as follows. Protein S19 forms a complex with S13 that binds strongly to the 16S ribosomal RNA. The polypeptide is Small ribosomal subunit protein uS19c (rps19) (Porphyra purpurea (Red seaweed)).